A 333-amino-acid chain; its full sequence is Biotin synthase (333 aa).

One can recognise a Radical SAM core domain in the interval 54-283 (FCSNTFDMCS…RAFIRLAGGR (230 aa)). Positions 72, 76, and 79 each coordinate [4Fe-4S] cluster. [2Fe-2S] cluster is bound by residues Ser116, Cys148, Cys208, and Arg278.

Belongs to the radical SAM superfamily. Biotin synthase family. In terms of assembly, homodimer. [4Fe-4S] cluster is required as a cofactor. Requires [2Fe-2S] cluster as cofactor.

It catalyses the reaction (4R,5S)-dethiobiotin + (sulfur carrier)-SH + 2 reduced [2Fe-2S]-[ferredoxin] + 2 S-adenosyl-L-methionine = (sulfur carrier)-H + biotin + 2 5'-deoxyadenosine + 2 L-methionine + 2 oxidized [2Fe-2S]-[ferredoxin]. It participates in cofactor biosynthesis; biotin biosynthesis; biotin from 7,8-diaminononanoate: step 2/2. Catalyzes the conversion of dethiobiotin (DTB) to biotin by the insertion of a sulfur atom into dethiobiotin via a radical-based mechanism. In Brachyspira hyodysenteriae (strain ATCC 49526 / WA1), this protein is Biotin synthase.